The following is a 463-amino-acid chain: Zinc finger protein PLAGL1 (463 aa).

C2H2-type zinc fingers lie at residues Tyr4 to His26, Tyr32 to His56, His62 to His84, Phe91 to His113, Leu120 to His142, His156 to His178, and Phe184 to His207. The tract at residues Leu285–Tyr310 is disordered. Pro residues predominate over residues Pro287–Pro297. Positions Leu298–Tyr310 are enriched in polar residues.

This sequence belongs to the krueppel C2H2-type zinc-finger protein family. Interacts with THRSP.

The protein localises to the nucleus. Acts as a transcriptional activator. Involved in the transcriptional regulation of type 1 receptor for pituitary adenylate cyclase-activating polypeptide. In Sus scrofa (Pig), this protein is Zinc finger protein PLAGL1 (PLAGL1).